The following is a 396-amino-acid chain: Elongation factor Tu (396 aa).

A tr-type G domain is found at 10 to 206; it reads KLHVNVGTIG…ALDTHIPNPE (197 aa). Residues 19-26 form a G1 region; that stretch reads GHVDHGKT. Residue 19 to 26 participates in GTP binding; it reads GHVDHGKT. Residue Thr26 participates in Mg(2+) binding. The tract at residues 60 to 64 is G2; it reads GITIS. The interval 81-84 is G3; that stretch reads DCPG. GTP-binding positions include 81 to 85 and 136 to 139; these read DCPGH and NKAD. Residues 136-139 form a G4 region; sequence NKAD. A G5 region spans residues 174 to 176; sequence SAL.

This sequence belongs to the TRAFAC class translation factor GTPase superfamily. Classic translation factor GTPase family. EF-Tu/EF-1A subfamily. Monomer.

It is found in the cytoplasm. The catalysed reaction is GTP + H2O = GDP + phosphate + H(+). Functionally, GTP hydrolase that promotes the GTP-dependent binding of aminoacyl-tRNA to the A-site of ribosomes during protein biosynthesis. The protein is Elongation factor Tu of Xylella fastidiosa (strain Temecula1 / ATCC 700964).